Here is a 339-residue protein sequence, read N- to C-terminus: Protein FAM76B (339 aa).

An N-acetylalanine modification is found at alanine 2. 2 positions are modified to phosphoserine: serine 22 and serine 148. Positions 144 to 243 (EQRKSLGSSH…INQSADSGGT (100 aa)) are disordered. Residues 148–160 (SLGSSHSNSSSSS) show a composition bias toward low complexity. Residues 167 to 189 (HHPKHHHHHHHHHHRHSSSHHKI) show a composition bias toward basic residues. Phosphoserine is present on serine 193. Phosphothreonine is present on threonine 215. The segment covering 215–224 (TPKKKPKLES) has biased composition (basic and acidic residues). The segment covering 228–243 (NGDSSSINQSADSGGT) has biased composition (polar residues). Residues 248 to 328 (LISQLKEEVM…QVAALSKGKK (81 aa)) are a coiled coil.

It belongs to the FAM76 family. As to quaternary structure, interacts with HNRNPA2B1 (via C-terminus); the interaction results in retention of HNRNPA2B1 in the nucleus and inhibition of the NF-kappa-B-mediated inflammatory pathway.

Its subcellular location is the nucleus speckle. Functionally, negatively regulates the NF-kappa-B-mediated inflammatory pathway by preventing the translocation of HNRNPA2B1 from the nucleus to the cytoplasm. Inhibits the PI3K/Akt/NF-kappa-B pathway-mediated polarization of M1 macrophages by binding to and stabilizing PIK3CD mRNA, resulting in increased levels of PIK3CD protein and increased levels of phosphorylated downstream target AKT which leads to decreased NF-kappa-B signaling. This is Protein FAM76B (FAM76B) from Homo sapiens (Human).